The sequence spans 776 residues: Systemic RNA interference defective protein 1 (776 aa).

Positions 1-17 are cleaved as a signal peptide; that stretch reads MIRVYLIILMHLVIGLT. Topologically, residues 18–319 are extracellular; sequence QNNSTTPSPI…ENQSYAVPTA (302 aa). N-linked (GlcNAc...) asparagine glycosylation is found at Asn19, Asn20, Asn32, Asn205, Asn210, Asn234, Asn290, and Asn311. The involved in dsRNA-binding stretch occupies residues 22–312; that stretch reads TTPSPIITSS…SFEFKKLENQ (291 aa). A helical membrane pass occupies residues 320–340; that stretch reads LMMIFLTTPCLLFLPIVINII. The Cytoplasmic portion of the chain corresponds to 341-429; sequence KNSRKLAPSQ…KQDSLSLHGQ (89 aa). Residues 360 to 390 form a disordered region; it reads PSEQRDMDLSHDEQQNTSSELENNGEIPAAE. A compositionally biased stretch (basic and acidic residues) spans 362 to 373; it reads EQRDMDLSHDEQ. Residues 430 to 450 form a helical membrane-spanning segment; that stretch reads MLQYPVAIILPVLMHTAIEFH. Residues 451-481 lie on the Extracellular side of the membrane; that stretch reads KWTTSTMANRDEMCFHNHACARPLGELRAWN. A helical membrane pass occupies residues 482-502; that stretch reads NIITNIGYTLYGAIFIVLSIC. The Cytoplasmic segment spans residues 503-510; that stretch reads RRGRHEYS. A helical membrane pass occupies residues 511–531; that stretch reads HVFGTYECTLLDVTIGVFMVL. Residues 532-543 are Extracellular-facing; it reads QSIASATYHICP. Residues 544-564 form a helical membrane-spanning segment; it reads SDVAFQFDTPCIQVICGLLMV. Over 565–575 the chain is Cytoplasmic; it reads RQWFVRHESPS. A helical transmembrane segment spans residues 576 to 596; sequence PAYTNILLVGVVSLNFLISAF. Residues 597–599 lie on the Extracellular side of the membrane; the sequence is SKT. A helical transmembrane segment spans residues 600-620; that stretch reads SYVRFIIAVIHVIVVGSICLA. Over 621–633 the chain is Cytoplasmic; it reads KERSLGSEKLKTR. Residues 634 to 654 traverse the membrane as a helical segment; the sequence is FFIMAFSMGNFAAIVMYLTLS. Residues 655-659 lie on the Extracellular side of the membrane; it reads AFHLN. Residues 660–680 traverse the membrane as a helical segment; it reads QIATYCFIINCIMYLMYYGCM. The Cytoplasmic segment spans residues 681 to 691; it reads KVLHSERITSK. Residues 692 to 712 form a helical membrane-spanning segment; sequence AKLCGALSLLAWAVAGFFFFQ. Over 713–741 the chain is Extracellular; it reads DDTDWTRSAAASRALNKPCLLLGFFGSHD. Residues 742 to 762 traverse the membrane as a helical segment; the sequence is LWHIFGALAGLFTFIFVSFVD. At 763-776 the chain is on the cytoplasmic side; that stretch reads DDLINTRKTSINIF.

The protein belongs to the SID1 family. May self-associate to form multimers. Expressed in most non-neuronal cells, including body wall muscle cells.

It localises to the cell membrane. Its function is as follows. Plays a role in RNA-mediated gene silencing by acting cell-autonomously as a channel for the transport of double-stranded RNA (dsRNA) between cells. Mediates the spread of dsRNA and subsequent silencing of genes in cells distant from the site of dsRNA introduction. Selective for dsRNA. Preferentially binds long dsRNA, from 50 base pairs up to 700. Short 20 base-pair long molecules are not bound. May also bind dsDNA, but with lower affinity. Binding may be sequence-independent. Required for avoidance behavior induced by small RNAs derived from pathogenic bacteria such as P.aeruginosa. This chain is Systemic RNA interference defective protein 1, found in Caenorhabditis elegans.